The chain runs to 1378 residues: DNA-directed RNA polymerase subunit beta (1378 aa).

The protein belongs to the RNA polymerase beta chain family. In terms of assembly, the RNAP catalytic core consists of 2 alpha, 1 beta, 1 beta' and 1 omega subunit. When a sigma factor is associated with the core the holoenzyme is formed, which can initiate transcription.

It catalyses the reaction RNA(n) + a ribonucleoside 5'-triphosphate = RNA(n+1) + diphosphate. Functionally, DNA-dependent RNA polymerase catalyzes the transcription of DNA into RNA using the four ribonucleoside triphosphates as substrates. This is DNA-directed RNA polymerase subunit beta from Roseobacter denitrificans (strain ATCC 33942 / OCh 114) (Erythrobacter sp. (strain OCh 114)).